The following is a 199-amino-acid chain: MEDAAAPGRTEGVLERQGAPPAAGQGGALVELTPTPGGLALVSPYHTHRAGDPLDLVALAEQVQKADEFIRANATNKLTVIAEQIQHLQEQARKVLEDAHRDANLHHVACNIVKKPGNIYYLYKRESGQQYFSIISPKEWGTSCPHDFLGAYKLQHDLSWTPYEDIEKQDAKISMMDTLLSQSVALPPCTEPNFQGLTH.

The tract at residues 1-30 (MEDAAAPGRTEGVLERQGAPPAAGQGGALV) is disordered. A coiled-coil region spans residues 71–101 (RANATNKLTVIAEQIQHLQEQARKVLEDAHR).

This is an uncharacterized protein from Homo sapiens (Human).